We begin with the raw amino-acid sequence, 225 residues long: Protein LiaH (225 aa).

Coiled coils occupy residues 58–151 and 161–182; these read KKYE…KEHM and ESAY…IRAN.

The protein belongs to the PspA/Vipp/IM30 family.

This Bacillus subtilis (strain 168) protein is Protein LiaH (liaH).